The sequence spans 307 residues: D-alanine--D-alanine ligase (307 aa).

The ATP-grasp domain occupies 110 to 299 (KQLWKGAGLP…FDVLVGEILL (190 aa)). Residue 136–185 (PVIVKPAHEGSSIGMAKADNTEELGEALVAAEKFDQDVLVEAWVNGPEYT) participates in ATP binding. 3 residues coordinate Mg(2+): D253, E266, and N268.

This sequence belongs to the D-alanine--D-alanine ligase family. The cofactor is Mg(2+). Mn(2+) serves as cofactor.

The protein resides in the cytoplasm. The catalysed reaction is 2 D-alanine + ATP = D-alanyl-D-alanine + ADP + phosphate + H(+). It functions in the pathway cell wall biogenesis; peptidoglycan biosynthesis. In terms of biological role, cell wall formation. The polypeptide is D-alanine--D-alanine ligase (Alcanivorax borkumensis (strain ATCC 700651 / DSM 11573 / NCIMB 13689 / SK2)).